The sequence spans 648 residues: MRYQGINEWLGGAKKLTTANGEIGAIYLSAAPPTDAARADAKAVDFTAGWPSAIVDCADATRAKQNYLWVGDNVVHIGAKHVPLLDLWGGTGDAWQQFVGYACPMLDLCRAWGLGYASASVTTGSLQGYQPSAFLDVEQQQFAKDNLNLYGDNCLDLATSSSAQRAFLEQCMGCALPEDCIFGWYVKMDWEGSAVADAYAAIRVQGFATVMAPWQSVGGAGYVYARVPQKGAWMGVNLLAYVHGTSGQPAYGIPMTLSGFTGNMGQVASKWLMLPLLMIVDPHVVQILAALGVKRGTKSDPRTTDVYADPKVPASRISGPMINGTVAPPATIPATIPVPLAPLGGAGGPGAQGFQVYPVFTWGLPEFMTDVTIEGTVTADSNGLHVVDDVRNYVWNGTALAAIEQVNAADGRVTLTDSERAQLASLTVRTASLRQQLSVGADPLSKTSIWRRAQKADYDLLSQQIIEADTVKNLPAVTFAQANKAAGGQSETLWHQMYRVNDIAGDQVTAIQITGTMATGIRWSATAGGLVVDADEQDAVIAISSGKPVKNSSDLPTADAVNYLFGITADDMPGIVSSQKEMNSEFEEGFLQKARLWNPRKLVENVQNAYFLMVYARDRKQFHSLVASSLAMAKLGVSTRACKESYGC.

Interacts with P6.

The protein localises to the virion membrane. Functionally, P3 protein is necessary for adsorption onto host cells. Attaches to a type IV pilus of the host. The protein is Spike protein P3 (P3) of Pseudomonas savastanoi pv. phaseolicola (Pseudomonas syringae pv. phaseolicola).